A 270-amino-acid chain; its full sequence is 5-amino-6-(5-phospho-D-ribitylamino)uracil phosphatase YitU (270 aa).

Aspartate 11 functions as the Nucleophile in the catalytic mechanism. Aspartate 11 serves as a coordination point for Mg(2+). Leucine 12 lines the phosphate pocket. Aspartate 13 provides a ligand contact to Mg(2+). Phosphate-binding positions include 45 to 46 and lysine 197; that span reads TG. Position 220 (aspartate 220) interacts with Mg(2+). Asparagine 223 is a phosphate binding site.

Belongs to the HAD-like hydrolase superfamily. Cof family. Requires Mg(2+) as cofactor.

The enzyme catalyses 5-amino-6-(5-phospho-D-ribitylamino)uracil + H2O = 5-amino-6-(D-ribitylamino)uracil + phosphate. The protein operates within cofactor biosynthesis; riboflavin biosynthesis; 5-amino-6-(D-ribitylamino)uracil from GTP: step 4/4. Its function is as follows. Catalyzes the dephosphorylation of the riboflavin precursor 5-amino-6-(5-phospho-D-ribitylamino)uracil and of flavin mononucleotide (FMN) in vitro. The chain is 5-amino-6-(5-phospho-D-ribitylamino)uracil phosphatase YitU (yitU) from Bacillus subtilis (strain 168).